The sequence spans 681 residues: Methionine--tRNA ligase (681 aa).

Positions 12–22 (PYANGSIHLGH) match the 'HIGH' region motif. The Zn(2+) site is built by cysteine 143, cysteine 146, cysteine 156, and cysteine 159. The short motif at 327-331 (KMSKS) is the 'KMSKS' region element. Lysine 330 serves as a coordination point for ATP. The span at 545-557 (FEKSNPEKAKQDP) shows a compositional bias: basic and acidic residues. Residues 545–566 (FEKSNPEKAKQDPSKSNTNEVK) are disordered. The 102-residue stretch at 580–681 (ELSKVELRVG…RDASPGDLLK (102 aa)) folds into the tRNA-binding domain.

It belongs to the class-I aminoacyl-tRNA synthetase family. MetG type 1 subfamily. As to quaternary structure, homodimer. It depends on Zn(2+) as a cofactor.

It localises to the cytoplasm. The enzyme catalyses tRNA(Met) + L-methionine + ATP = L-methionyl-tRNA(Met) + AMP + diphosphate. Is required not only for elongation of protein synthesis but also for the initiation of all mRNA translation through initiator tRNA(fMet) aminoacylation. In Leptospira biflexa serovar Patoc (strain Patoc 1 / ATCC 23582 / Paris), this protein is Methionine--tRNA ligase.